Here is a 289-residue protein sequence, read N- to C-terminus: MRHIICHGGVITEEMAASLLDQLIEEVLADNLPPPSHFEPPTLHELYDLDVTAPEDPNEEAVSQIFPDSVMLAVQEGIDLLTFPPAPGSPEPPHLSRQPEQPEQRALGPVSMPNLVPEVIDLTCHEAGFPPSDDEDEEGEEFVLDYVEHPGHGCRSCHYHRRNTGDPDIMCSLCYMRTCGMFVYSPVSEPEPEPEPEPEPARPTRRPKLVPAILRRPTSPVSRECNSSTDSCDSGPSNTPPEIHPVVPLCPIKPVAVRVGGRRQAVECIEDLLNESGQPLDLSCKRPRP.

The tract at residues 41–49 (PTLHELYDL) is interaction with RB1 in competition with E2F1. The interval 76-140 (EGIDLLTFPP…PSDDEDEEGE (65 aa)) is interaction with UBE2I. Residues 82–107 (TFPPAPGSPEPPHLSRQPEQPEQRAL) form a disordered region. The span at 84–93 (PPAPGSPEPP) shows a compositional bias: pro residues. A Phosphoserine; by host modification is found at Ser89. A PXLXP motif, interaction with host ZMYND11 motif is present at residues 113 to 117 (PNLVP). The LXCXE motif, interaction with host RB1 and TMEM173/STING signature appears at 122–126 (LTCHE). A zinc finger spans residues 154 to 174 (CRSCHYHRRNTGDPDIMCSLC). A disordered region spans residues 187–245 (VSEPEPEPEPEPEPARPTRRPKLVPAILRRPTSPVSRECNSSTDSCDSGPSNTPPEIHP). Residues Ser219 and Ser231 each carry the phosphoserine; by host modification. Residues 219 to 237 (SPVSRECNSSTDSCDSGPS) show a composition bias toward polar residues. Positions 258 to 289 (RVGGRRQAVECIEDLLNESGQPLDLSCKRPRP) match the Bipartite nuclear localization signal motif. A PXDLS motif, CTBP-binding motif is present at residues 279–283 (PLDLS).

The protein belongs to the adenoviridae E1A protein family. As to quaternary structure, interacts with host UBE2I; this interaction interferes with polySUMOylation. Interacts with host RB1; this interaction induces the aberrant dissociation of RB1-E2F1 complex thereby disrupting the activity of RB1 and activating E2F1-regulated genes. Interacts with host ATF7; the interaction enhances ATF7-mediated viral transactivation activity which requires the zinc binding domains of both proteins. Isoform early E1A 32 kDa protein and isoform early E1A 26 kDa protein interact (via N-terminus) with CUL1 and E3 ubiquitin ligase RBX1; these interactions inhibit RBX1-CUL1-dependent elongation reaction of ubiquitin chains and attenuate ubiquitination of SCF(FBXW7) target proteins. Interacts (via PXLXP motif) with host ZMYND11/BS69 (via MYND-type zinc finger); this interaction inhibits E1A mediated transactivation. Interacts with host EP300; this interaction stimulates the acetylation of RB1 by recruiting EP300 and RB1 into a multimeric-protein complex. Interacts with host CTBP1 and CTBP2; this interaction seems to potentiate viral replication. Interacts with host DCAF7. Interacts with host DYRK1A. Interacts with host KPNA4; this interaction allows E1A import into the host nucleus. Interacts with host EP400; this interaction stabilizes MYC. Interacts (via LXCXE motif) with host TMEM173/STING; this interaction impairs the ability of TMEM173/STING to sense cytosolic DNA and promote the production of type I interferon (IFN-alpha and IFN-beta). Interacts (via C-terminus) with host ZBED1/hDREF (via C-terminus); the interaction is direct.

It localises to the host nucleus. Plays a role in viral genome replication by driving entry of quiescent cells into the cell cycle. Stimulation of progression from G1 to S phase allows the virus to efficiently use the cellular DNA replicating machinery to achieve viral genome replication. E1A protein has both transforming and trans-activating activities. Induces the disassembly of the E2F1 transcription factor from RB1 by direct competition for the same binding site on RB1, with subsequent transcriptional activation of E2F1-regulated S-phase genes and of the E2 region of the adenoviral genome. Release of E2F1 leads to the ARF-mediated inhibition of MDM2 and causes TP53/p53 to accumulate because it is not targeted for degradation by MDM2-mediated ubiquitination anymore. This increase in TP53, in turn, would arrest the cell proliferation and direct its death but this effect is counteracted by the viral protein E1B-55K. Inactivation of the ability of RB1 to arrest the cell cycle is critical for cellular transformation, uncontrolled cellular growth and proliferation induced by viral infection. Interaction with RBX1 and CUL1 inhibits ubiquitination of the proteins targeted by SCF(FBXW7) ubiquitin ligase complex, and may be linked to unregulated host cell proliferation. The tumorigenesis-restraining activity of E1A may be related to the disruption of the host CtBP-CtIP complex through the CtBP binding motif. Interacts with host TBP protein; this interaction probably disrupts the TBP-TATA complex. Interaction with host TMEM173/STING impairs the ability of TMEM173/STING to sense cytosolic DNA and promote the production of type I interferon (IFN-alpha and IFN-beta). Promotes the sumoylation of host ZBED1/hDREF with SUMO1. In Homo sapiens (Human), this protein is Early E1A protein.